Consider the following 549-residue polypeptide: Mitochondrial hydroperoxide bicyclase CYP50918A1 (549 aa).

Residues 1–75 are disordered; it reads MPDAFDVSDD…PQGNRKPAVL (75 aa). Basic and acidic residues predominate over residues 8–26; sequence SDDKQLVDQQLTRDSDSKP. Residues 27 to 41 show a composition bias toward low complexity; that stretch reads AAKPASKQKPPSKVP. Cysteine 491 provides a ligand contact to heme. The interval 528–549 is disordered; sequence DTGDHGPPNGKFSVIKPRQPKH.

It belongs to the cytochrome P450 family. Heme serves as cofactor.

The protein resides in the mitochondrion. The enzyme catalyses (13S)-hydroperoxy-(9Z,11E,15Z)-octadecatrienoate = plasmodiophorol A. It carries out the reaction (13S)-hydroperoxy-(9Z,11E,15Z)-octadecatrienoate = plasmodiophorol B. Its pathway is lipid metabolism; oxylipin biosynthesis. Its function is as follows. Cytochrome P450 hydroperoxide bicyclase involved in the metabolism of oxylipins natural products such as egregiachlorides, hybridalactone, ecklonialactones and related bicyclic oxylipins. Isomerizes the hydroperoxides into epoxyalcohols via epoxyallylic radical. Can use alpha-linolenic 13-hydroperoxide ((9Z,11E,13S,15Z)-13-hydroperoxy-9,11,15-octadecatrienoic, 13-HPOT) as preferred substrate to produce the heterobicyclic oxylipins plasmodiophorol A (6-oxabicyclo[3.1.0]hexane) and plasmodiophorol B (2-oxabicyclo[2.2.1]heptane) at the ratio 12:1 and a minor product plasmodiophorol C (cyclopentanediol) formed through the hydrolysis of plasmodiophorols A and B and, to a lower extent, active with linoleic acid 13-hydroperoxide ((9Z,11E,13S)-13-hydroperoxy-9,11-octadecadienoic, 13-HPOD), linoleic acid 9-hydroperoxide ((9S,10E,12Z)-9-hydroperoxy-10,12-octadecadienoic, 9-HPOD) and alpha-linolenic 9-hydroperoxide ((9S,10E,12Z,15Z)-9-hydroperoxy-10,12,15-octadecatrienoic, 9-HPOT). The polypeptide is Mitochondrial hydroperoxide bicyclase CYP50918A1 (Plasmodiophora brassicae (Clubroot disease agent)).